The sequence spans 341 residues: Retinol dehydrogenase 10 (341 aa).

A helical; Signal-anchor membrane pass occupies residues 3–23 (IVLEFFLVTFKVLWAFVLAAA). Residue 40 to 64 (LITGAGSGLGRLFALEFARRRAQLV) participates in NADP(+) binding. Serine 197 lines the substrate pocket. Tyrosine 210 functions as the Proton acceptor in the catalytic mechanism.

It belongs to the short-chain dehydrogenases/reductases (SDR) family.

It localises to the microsome membrane. Its subcellular location is the endoplasmic reticulum membrane. It catalyses the reaction all-trans-retinol + NADP(+) = all-trans-retinal + NADPH + H(+). Its pathway is cofactor metabolism; retinol metabolism. Functionally, retinol dehydrogenase with a clear preference for NADP. Converts all-trans-retinol to all-trans-retinal. Has no detectable activity towards 11-cis-retinol, 9-cis-retinol and 13-cis-retinol. The polypeptide is Retinol dehydrogenase 10 (rdh10) (Xenopus tropicalis (Western clawed frog)).